The primary structure comprises 55 residues: Sec-independent protein translocase protein TatA (55 aa).

The chain crosses the membrane as a helical span at residues 1–21; the sequence is MFGELGVPEVLFILGIALLIF.

This sequence belongs to the TatA/E family. In terms of assembly, forms a complex with TatC.

It localises to the cell inner membrane. Functionally, part of the twin-arginine translocation (Tat) system that transports large folded proteins containing a characteristic twin-arginine motif in their signal peptide across membranes. TatA could form the protein-conducting channel of the Tat system. This is Sec-independent protein translocase protein TatA from Koribacter versatilis (strain Ellin345).